The primary structure comprises 933 residues: Myocardin (933 aa).

The MEF2C-binding signature appears at 12–27 (IRSKFRSVLQLRLQQR). RPEL repeat units lie at residues 18-43 (SVLQ…PPLR), 62-87 (DTLK…QASS), and 106-131 (DDLN…PVDC). The interval 153–205 (FEEDSSSDGLSPDQTRSEDLPGSAGSPLDTKAAETPLAGPRGTVQDLTLGSEN) is HDAC5-binding. 2 disordered regions span residues 154-282 (EEDS…PPPM) and 324-365 (NEQM…GPLP). A compositionally biased stretch (polar residues) spans 210 to 220 (SAPQSGNQSDL). A compositionally biased stretch (basic residues) spans 248–265 (NRHKKPKDPKPKVKKLKY). Positions 330 to 346 (NPNSSSAPLSSTPLSPA) are enriched in low complexity. Over residues 347–357 (KNSFSGQTGVS) the composition is skewed to polar residues. One can recognise an SAP domain in the interval 368–402 (LDDLKVSELRQQLRIRGLPVSGTKTALMDRLRPFQ). Phosphoserine; by GSK3-beta is present on residues Ser-445, Ser-449, Ser-453, and Ser-457. The stretch at 515 to 550 (LVEKQKVINELTWKLQQEQRQVEELRMQLQKQKRGT) forms a coiled coil. The disordered stretch occupies residues 568-613 (DAGSSCPFAPLPRAVKRQSNSSEEQPAAGDAARLRPLGNTHCAESS). Phosphoserine; by GSK3-beta occurs at positions 621, 625, 629, and 633. Disordered stretches follow at residues 630 to 672 (PQHS…VSSP) and 760 to 794 (PKIP…FDHY). Residues 712–933 (ITQPPSYEDA…SPMDLHLQQW (222 aa)) form a required for interaction with and ubiquitination by STUB1 region. Phosphoserine; by MAPK1 and MAPK3 occurs at positions 810, 857, and 864. A Phosphothreonine; by MAPK1 and MAPK3 modification is found at Thr-891.

In terms of assembly, homodimer. Interacts with MLLT7/FOXO4. Interacts with SRF, its association does not depend on specific DNA sequences for ternary complex formation. Interacts (via C-terminal) with EP300 (via the CREB-binding domain). Interacts with HDAC4 and HDAC5. Interacts with MEF2C. Interacts (via C-terminus) with STUB1/CHIP. Interacts with PURB. In terms of processing, ubiquitinated; by STUB1/CHIP at the C-terminus, leading to its degradation by the proteasome. Phosphorylation by GSK3B is required for STUB1/CHIP-mediated ubiquitination. Phosphorylation negatively regulates the intrinsic myocardin transcriptional activity. Phosphorylated; by GSK3B. Expressed in the heart and in smooth muscle cells-containing tissues (aorta, pulmonary vein, lung), but is not detectable in skeletal muscle, liver, kidney and spleen.

It localises to the nucleus. Its function is as follows. Smooth muscle cells (SM) and cardiac muscle cells-specific transcriptional factor which uses the canonical single or multiple CArG boxes DNA sequence. Acts as a cofactor of serum response factor (SRF) with the potential to modulate SRF-target genes. Plays a crucial role in cardiogenesis, urinary bladder development, and differentiation of the smooth muscle cell lineage (myogenesis). Positively regulates the transcription of genes involved in vascular smooth muscle contraction. In Sus scrofa (Pig), this protein is Myocardin (MYOCD).